The sequence spans 478 residues: Protein nucleotidyltransferase YdiU (478 aa).

Residues G74, G76, R77, K97, D109, G110, R160, and R167 each coordinate ATP. D236 serves as the catalytic Proton acceptor. The Mg(2+) site is built by N237 and D246. D246 contributes to the ATP binding site.

It belongs to the SELO family. Mg(2+) is required as a cofactor. It depends on Mn(2+) as a cofactor.

It carries out the reaction L-seryl-[protein] + ATP = 3-O-(5'-adenylyl)-L-seryl-[protein] + diphosphate. The enzyme catalyses L-threonyl-[protein] + ATP = 3-O-(5'-adenylyl)-L-threonyl-[protein] + diphosphate. The catalysed reaction is L-tyrosyl-[protein] + ATP = O-(5'-adenylyl)-L-tyrosyl-[protein] + diphosphate. It catalyses the reaction L-histidyl-[protein] + UTP = N(tele)-(5'-uridylyl)-L-histidyl-[protein] + diphosphate. It carries out the reaction L-seryl-[protein] + UTP = O-(5'-uridylyl)-L-seryl-[protein] + diphosphate. The enzyme catalyses L-tyrosyl-[protein] + UTP = O-(5'-uridylyl)-L-tyrosyl-[protein] + diphosphate. In terms of biological role, nucleotidyltransferase involved in the post-translational modification of proteins. It can catalyze the addition of adenosine monophosphate (AMP) or uridine monophosphate (UMP) to a protein, resulting in modifications known as AMPylation and UMPylation. This Chromobacterium violaceum (strain ATCC 12472 / DSM 30191 / JCM 1249 / CCUG 213 / NBRC 12614 / NCIMB 9131 / NCTC 9757 / MK) protein is Protein nucleotidyltransferase YdiU.